Reading from the N-terminus, the 125-residue chain is Small ribosomal subunit protein uS12 (125 aa).

Residues 1-31 form a disordered region; the sequence is MPTINQLVRHGRQTEVTKSKSPAMQGGPQRR. At aspartate 89 the chain carries 3-methylthioaspartic acid. Residues 105 to 125 are disordered; sequence QGVKDRKQSRSKYGAKRPKKA. Residues 113–125 are compositionally biased toward basic residues; that stretch reads SRSKYGAKRPKKA.

It belongs to the universal ribosomal protein uS12 family. Part of the 30S ribosomal subunit. Contacts proteins S8 and S17. May interact with IF1 in the 30S initiation complex.

Its function is as follows. With S4 and S5 plays an important role in translational accuracy. Functionally, interacts with and stabilizes bases of the 16S rRNA that are involved in tRNA selection in the A site and with the mRNA backbone. Located at the interface of the 30S and 50S subunits, it traverses the body of the 30S subunit contacting proteins on the other side and probably holding the rRNA structure together. The combined cluster of proteins S8, S12 and S17 appears to hold together the shoulder and platform of the 30S subunit. The polypeptide is Small ribosomal subunit protein uS12 (Methylibium petroleiphilum (strain ATCC BAA-1232 / LMG 22953 / PM1)).